The primary structure comprises 164 residues: Ferredoxin-type protein NapF (164 aa).

4Fe-4S ferredoxin-type domains are found at residues 28-57 (GDES…RGAG), 58-89 (GYPS…PRHT), and 132-161 (YQPQ…AEYL). 12 residues coordinate [4Fe-4S] cluster: C37, C40, C43, C47, C69, C72, C75, C79, C141, C144, C147, and C151.

The protein belongs to the NapF family. As to quaternary structure, interacts with the cytoplasmic NapA precursor. It depends on [4Fe-4S] cluster as a cofactor.

It is found in the cytoplasm. Could be involved in the maturation of NapA, the catalytic subunit of the periplasmic nitrate reductase, before its export into the periplasm. This Escherichia coli O157:H7 protein is Ferredoxin-type protein NapF.